The chain runs to 249 residues: Cytochrome c oxidase subunit 2 (249 aa).

A run of 2 helical transmembrane segments spans residues 40–60 and 81–101; these read NIMF…YTIT and IIWT…SFIL. The Cu cation site is built by H184, C219, E221, C223, H227, and M230. E221 contributes to the Mg(2+) binding site.

It belongs to the cytochrome c oxidase subunit 2 family. Component of the cytochrome c oxidase (complex IV, CIV), a multisubunit enzyme composed of a catalytic core of 3 subunits and several supernumerary subunits. The complex exists as a monomer or a dimer and forms supercomplexes (SCs) in the inner mitochondrial membrane with ubiquinol-cytochrome c oxidoreductase (cytochrome b-c1 complex, complex III, CIII). Cu cation is required as a cofactor.

The protein resides in the mitochondrion inner membrane. It carries out the reaction 4 Fe(II)-[cytochrome c] + O2 + 8 H(+)(in) = 4 Fe(III)-[cytochrome c] + 2 H2O + 4 H(+)(out). In terms of biological role, component of the cytochrome c oxidase, the last enzyme in the mitochondrial electron transport chain which drives oxidative phosphorylation. The respiratory chain contains 3 multisubunit complexes succinate dehydrogenase (complex II, CII), ubiquinol-cytochrome c oxidoreductase (cytochrome b-c1 complex, complex III, CIII) and cytochrome c oxidase (complex IV, CIV), that cooperate to transfer electrons derived from NADH and succinate to molecular oxygen, creating an electrochemical gradient over the inner membrane that drives transmembrane transport and the ATP synthase. Cytochrome c oxidase is the component of the respiratory chain that catalyzes the reduction of oxygen to water. Electrons originating from reduced cytochrome c in the intermembrane space (IMS) are transferred via the dinuclear copper A center (CU(A)) of subunit 2 and heme A of subunit 1 to the active site in subunit 1, a binuclear center (BNC) formed by heme A3 and copper B (CU(B)). The BNC reduces molecular oxygen to 2 water molecules using 4 electrons from cytochrome c in the IMS and 4 protons from the mitochondrial matrix. The protein is Cytochrome c oxidase subunit 2 (COX2) of Vanderwaltozyma polyspora (strain ATCC 22028 / DSM 70294 / BCRC 21397 / CBS 2163 / NBRC 10782 / NRRL Y-8283 / UCD 57-17) (Kluyveromyces polysporus).